The sequence spans 522 residues: tRNA-2-methylthio-N(6)-dimethylallyladenosine synthase (522 aa).

The MTTase N-terminal domain occupies 24–140 (RTYEVKTYGC…LPTLLQRAEH (117 aa)). C33, C69, C103, C177, C181, and C184 together coordinate [4Fe-4S] cluster. Positions 163-399 (RESAYAGWVS…MVVQEQVCEE (237 aa)) constitute a Radical SAM core domain. In terms of domain architecture, TRAM spans 402 to 473 (QKLIGTTVEL…PFFLIADSGV (72 aa)).

The protein belongs to the methylthiotransferase family. MiaB subfamily. As to quaternary structure, monomer. [4Fe-4S] cluster is required as a cofactor.

Its subcellular location is the cytoplasm. The catalysed reaction is N(6)-dimethylallyladenosine(37) in tRNA + (sulfur carrier)-SH + AH2 + 2 S-adenosyl-L-methionine = 2-methylsulfanyl-N(6)-dimethylallyladenosine(37) in tRNA + (sulfur carrier)-H + 5'-deoxyadenosine + L-methionine + A + S-adenosyl-L-homocysteine + 2 H(+). In terms of biological role, catalyzes the methylthiolation of N6-(dimethylallyl)adenosine (i(6)A), leading to the formation of 2-methylthio-N6-(dimethylallyl)adenosine (ms(2)i(6)A) at position 37 in tRNAs that read codons beginning with uridine. This chain is tRNA-2-methylthio-N(6)-dimethylallyladenosine synthase, found in Corynebacterium glutamicum (strain ATCC 13032 / DSM 20300 / JCM 1318 / BCRC 11384 / CCUG 27702 / LMG 3730 / NBRC 12168 / NCIMB 10025 / NRRL B-2784 / 534).